The following is a 273-amino-acid chain: Cytoplasmic phosphatidylinositol transfer protein 1 (273 aa).

Positions glutamine 244–aspartate 273 are disordered.

Belongs to the PtdIns transfer protein family. PI transfer class IIB subfamily.

In terms of biological role, phosphatidylinositol transfer proteins mediate the monomeric transport of lipids by shielding a lipid from the aqueous environment and binding the lipid in a hydrophobic cavity. This Drosophila melanogaster (Fruit fly) protein is Cytoplasmic phosphatidylinositol transfer protein 1 (rdgBbeta).